The following is a 653-amino-acid chain: Hepatocyte growth factor activator serine protease (653 aa).

The first 34 residues, 1–34, serve as a signal peptide directing secretion; it reads MGRQAWISSLCPLPRPCPFLLLLLLLVVPRGAQP. The tract at residues 34–98 is disordered; that stretch reads PQAGRNHTEP…SSSPPGGQVL (65 aa). The propeptide at 35–369 is removed in mature form; it reads QAGRNHTEPP…RLTACESLAR (335 aa). Residues Asn-39, Asn-47, and Asn-63 are each glycosylated (N-linked (GlcNAc...) asparagine). The span at 47–59 shows a compositional bias: low complexity; that stretch reads NVTATPVTPTIPV. A Fibronectin type-II domain is found at 100-147; it reads ESGQPCRFPFRYGGRMLHSCTSEGSAYRKWCATTHNYDRDRAWGYCAE. 19 cysteine pairs are disulfide-bonded: Cys-105–Cys-130, Cys-119–Cys-145, Cys-161–Cys-172, Cys-166–Cys-183, Cys-185–Cys-194, Cys-199–Cys-227, Cys-225–Cys-234, Cys-242–Cys-253, Cys-247–Cys-264, Cys-266–Cys-275, Cys-283–Cys-364, Cys-304–Cys-346, Cys-335–Cys-359, Cys-392–Cys-519, Cys-430–Cys-446, Cys-438–Cys-508, Cys-533–Cys-602, Cys-565–Cys-581, and Cys-592–Cys-620. An EGF-like 1 domain is found at 157–195; it reads ILDPCASGPCLNGGTCSSTHDHGSYHCSCPLAFTGKDCG. Residues 197-237 enclose the Fibronectin type-I domain; the sequence is EKCFDETRYEYFEVGDHWARVSEGHVEQCGCMEGQARCEDT. Positions 238–276 constitute an EGF-like 2 domain; the sequence is HHTACLSSPCLNGGTCHLIVGTGTSVCTCPLGYAGRFCN. Residues 283–364 enclose the Kringle domain; the sequence is CFLGNGTEYR…SWEYCRLTAC (82 aa). A glycan (N-linked (GlcNAc...) asparagine) is linked at Asn-287. The 239-residue stretch at 406 to 644 folds into the Peptidase S1 domain; it reads IIGGSSSLPG…YVDWINDRIR (239 aa). Catalysis depends on His-445, which acts as the Charge relay system. The N-linked (GlcNAc...) asparagine glycan is linked to Asn-466. The Charge relay system role is filled by Asp-495. Asn-544 carries an N-linked (GlcNAc...) asparagine glycan. Residue Ser-596 is the Charge relay system of the active site.

This sequence belongs to the peptidase S1 family. Heterodimer of a short chain and a long chain linked by a disulfide bond. Post-translationally, the active form of HGFAC presents in the serum is derived from the COOH-terminal region of the precursor by the cleavage of bonds between Arg-369 and Val-370 and Arg-405 and Ile-406.

The protein localises to the secreted. Functionally, serine protease that hydrolyzes the inactive zymogen hepatocyte growth factor (HGFsc) to an activated disulfide-linked heterodimer, then initiating hepatocyte growth factor receptor signaling pathway. The sequence is that of Hepatocyte growth factor activator serine protease from Mus musculus (Mouse).